The sequence spans 297 residues: uncharacterized protein (297 aa).

Residues 267-297 (NTQHAGKPGAQHRTRRSPPAFRRADRLRQSA) are disordered. Positions 288-297 (RRADRLRQSA) are enriched in basic and acidic residues.

This is an uncharacterized protein from Treponema pallidum (strain Nichols).